Here is a 351-residue protein sequence, read N- to C-terminus: Ribosomal RNA large subunit methyltransferase M (351 aa).

S-adenosyl-L-methionine-binding positions include Ser186, 219-222 (APGG), Asp238, Asp258, and Asp274. Lys303 (proton acceptor) is an active-site residue.

This sequence belongs to the class I-like SAM-binding methyltransferase superfamily. RNA methyltransferase RlmE family. RlmM subfamily. As to quaternary structure, monomer.

Its subcellular location is the cytoplasm. It carries out the reaction cytidine(2498) in 23S rRNA + S-adenosyl-L-methionine = 2'-O-methylcytidine(2498) in 23S rRNA + S-adenosyl-L-homocysteine + H(+). Catalyzes the 2'-O-methylation at nucleotide C2498 in 23S rRNA. This chain is Ribosomal RNA large subunit methyltransferase M, found in Xylella fastidiosa (strain M12).